A 149-amino-acid polypeptide reads, in one-letter code: Calmodulin (149 aa).

Residue Ala2 is modified to N-acetylalanine. EF-hand domains lie at 8–43, 44–79, 81–116, and 117–149; these read EQISEFKEAFSLFDKDGDGTITTKELGTVMRSLGQN, PTEAELQDMINEVDADGNGTIDFPEFLTMMARKMRD, DSEEEIKEAFKVFDKDGNGYISAAELRHVMTNLGEK, and LTDNEVDEMIREADIDGDGQINYEEFVKMMLSK. Positions 21, 23, 25, 27, 32, 57, 59, 61, 63, 68, 94, 96, 98, 100, 105, 130, 132, 134, 136, and 141 each coordinate Ca(2+).

The protein belongs to the calmodulin family. Post-translationally, trimethylation of Lys-116 observed in other calmodulins is absent here.

Functionally, calmodulin mediates the control of a large number of enzymes, ion channels and other proteins by Ca(2+). Among the enzymes to be stimulated by the calmodulin-Ca(2+) complex are a number of protein kinases and phosphatases. The polypeptide is Calmodulin (CMD1) (Pleurotus cornucopiae (Cornucopia mushroom)).